Reading from the N-terminus, the 283-residue chain is Thymidylate synthase (283 aa).

R22 provides a ligand contact to dUMP. The active-site Nucleophile is the C160. Residues 180–183 (RSCD), N191, and 221–223 (HIY) contribute to the dUMP site. Residue D183 participates in (6R)-5,10-methylene-5,6,7,8-tetrahydrofolate binding. A (6R)-5,10-methylene-5,6,7,8-tetrahydrofolate-binding site is contributed by S282.

The protein belongs to the thymidylate synthase family. Bacterial-type ThyA subfamily. As to quaternary structure, homodimer.

Its subcellular location is the cytoplasm. It carries out the reaction dUMP + (6R)-5,10-methylene-5,6,7,8-tetrahydrofolate = 7,8-dihydrofolate + dTMP. It functions in the pathway pyrimidine metabolism; dTTP biosynthesis. Functionally, catalyzes the reductive methylation of 2'-deoxyuridine-5'-monophosphate (dUMP) to 2'-deoxythymidine-5'-monophosphate (dTMP) while utilizing 5,10-methylenetetrahydrofolate (mTHF) as the methyl donor and reductant in the reaction, yielding dihydrofolate (DHF) as a by-product. This enzymatic reaction provides an intracellular de novo source of dTMP, an essential precursor for DNA biosynthesis. The protein is Thymidylate synthase of Shewanella piezotolerans (strain WP3 / JCM 13877).